The following is a 207-amino-acid chain: Ribosomal RNA small subunit methyltransferase G (207 aa).

S-adenosyl-L-methionine-binding positions include glycine 77, phenylalanine 82, 100–102 (ERS), and arginine 141.

The protein belongs to the methyltransferase superfamily. RNA methyltransferase RsmG family.

Its subcellular location is the cytoplasm. Its function is as follows. Specifically methylates the N7 position of a guanine in 16S rRNA. This is Ribosomal RNA small subunit methyltransferase G from Borrelia hermsii (strain HS1 / DAH).